The chain runs to 233 residues: Auxin-responsive protein IAA11 (233 aa).

2 disordered regions span residues 1–27 (MAGL…RSSG) and 46–100 (PAAV…PKAQ). The EAR-like (transcriptional repression) signature appears at 11-15 (LRLGL). Over residues 54-63 (GAQEDKEDAD) the composition is skewed to acidic residues. In terms of domain architecture, PB1 spans 122-217 (AALVKVSMDG…SCKRLRIMKG (96 aa)).

It belongs to the Aux/IAA family. As to quaternary structure, homodimers and heterodimers. In terms of tissue distribution, highly expressed in etiolated shoots. Expressed in roots.

It is found in the nucleus. Its function is as follows. Aux/IAA proteins are short-lived transcriptional factors that function as repressors of early auxin response genes at low auxin concentrations. This chain is Auxin-responsive protein IAA11 (IAA11), found in Oryza sativa subsp. japonica (Rice).